Reading from the N-terminus, the 59-residue chain is Large ribosomal subunit protein uL30 (59 aa).

It belongs to the universal ribosomal protein uL30 family. In terms of assembly, part of the 50S ribosomal subunit.

The polypeptide is Large ribosomal subunit protein uL30 (Geotalea uraniireducens (strain Rf4) (Geobacter uraniireducens)).